A 98-amino-acid chain; its full sequence is Large ribosomal subunit protein eL21 (98 aa).

This sequence belongs to the eukaryotic ribosomal protein eL21 family.

The chain is Large ribosomal subunit protein eL21 from Methanocorpusculum labreanum (strain ATCC 43576 / DSM 4855 / Z).